The primary structure comprises 1188 residues: Probable RNA helicase armi (1188 aa).

723–730 is an ATP binding site; that stretch reads GPPGSGKT. A DEAG box motif is present at residues 862–865; the sequence is DEAG.

This sequence belongs to the DNA2/NAM7 helicase family. SDE3 subfamily. Forms a complex with piwi and fs(1)Yb; this interaction is required for proper piRNA loading and nuclear localization of piwi. The interaction of piwi and fs(1)Yb is likely to occur via armi. As to expression, abundant in oocytes and syncytial blastoderm. Expressed at low level throughout development, including somatic tissues. First apparent early in oogenesis, in the cytoplasm of stem cells and mitotically dividing cystoblasts. In regions 2a and 2b of the germarium, it is most concentrated in the center of the germline cysts, where the pro-oocyte is located. In stage 1 and early stage 2 egg chambers, it accumulates at the anterior of the oocyte, near the ring canals. It also extends through the ring canals forming a branched structure that links the early oocyte with adjacent nurse cells. In stage 3 cysts, it accumulates at the posterior cortex and localizes to extensions that pass through the oocyte into the nurse cells. Through stages 4 to 7, it continues to be somewhat enriched at the posterior cortex of the oocyte, but at significantly lower level. In stage 9 to 10 egg chambers, it is found throughout the cytoplasm of the oocyte and nurse cells, with slight enrichment at the oocyte cortex.

The protein resides in the cytoplasm. It catalyses the reaction ATP + H2O = ADP + phosphate + H(+). Functionally, probable RNA helicase required for axial polarization of the oocyte during early and mid oogenesis. Plays a central role in RNA interference (RNAi) process, a process that mediates mRNA destruction of translational repression. Required for the assembly of the RISC complex, a complex required for target RNA destruction or repression. May be required in the RISC assembly to unwind miRNAs, in the production of single-stranded miRNA from the double-stranded miRNA, a key step in RISC formation. Required both for the translational control of oskar (osk) mRNA and cytoskeletal polarization in the oocyte. Required for somatic primary piRNA biogenesis. Involved in repression of long interspersed nuclear elements (LINEs) including HeT-A, I-element and TART LINEs. The polypeptide is Probable RNA helicase armi (Drosophila melanogaster (Fruit fly)).